The primary structure comprises 932 residues: Isoleucine--tRNA ligase (932 aa).

A 'HIGH' region motif is present at residues 58-68; the sequence is PYANGDIHIGH. An L-isoleucyl-5'-AMP-binding site is contributed by Glu559. Residues 600–604 carry the 'KMSKS' region motif; it reads KMSKS. Residue Lys603 participates in ATP binding. Zn(2+)-binding residues include Cys895, Cys898, Cys915, and Cys918.

The protein belongs to the class-I aminoacyl-tRNA synthetase family. IleS type 1 subfamily. In terms of assembly, monomer. Zn(2+) is required as a cofactor.

The protein resides in the cytoplasm. It carries out the reaction tRNA(Ile) + L-isoleucine + ATP = L-isoleucyl-tRNA(Ile) + AMP + diphosphate. Catalyzes the attachment of isoleucine to tRNA(Ile). As IleRS can inadvertently accommodate and process structurally similar amino acids such as valine, to avoid such errors it has two additional distinct tRNA(Ile)-dependent editing activities. One activity is designated as 'pretransfer' editing and involves the hydrolysis of activated Val-AMP. The other activity is designated 'posttransfer' editing and involves deacylation of mischarged Val-tRNA(Ile). This Saccharophagus degradans (strain 2-40 / ATCC 43961 / DSM 17024) protein is Isoleucine--tRNA ligase.